The primary structure comprises 167 residues: Putative peroxiredoxin-B (167 aa).

The 164-residue stretch at 4 to 167 (IKRGDRFPTT…STAQKIIAKL (164 aa)) folds into the Thioredoxin domain. The Cysteine sulfenic acid (-SOH) intermediate role is filled by cysteine 53. Residues 165–167 (AKL) carry the Microbody targeting signal motif.

The protein belongs to the peroxiredoxin family. Prx5 subfamily.

The protein localises to the peroxisome membrane. The enzyme catalyses a hydroperoxide + [thioredoxin]-dithiol = an alcohol + [thioredoxin]-disulfide + H2O. In terms of biological role, thiol-specific peroxidase that catalyzes the reduction of hydrogen peroxide and organic hydroperoxides to water and alcohols, respectively. Plays a role in cell protection against oxidative stress by detoxifying peroxides and as sensor of hydrogen peroxide-mediated signaling events. The protein is Putative peroxiredoxin-B (PMPB) of Candida boidinii (Yeast).